A 370-amino-acid chain; its full sequence is Gibberellin 3-beta-dioxygenase 2-2 (370 aa).

The Fe2OG dioxygenase domain maps to 205–306; sequence MTATMHLNWY…RISLGYFLGP (102 aa). Positions 229, 231, and 287 each coordinate Fe cation. Residue Arg-297 is part of the active site.

The protein belongs to the iron/ascorbate-dependent oxidoreductase family. GA3OX subfamily. It depends on L-ascorbate as a cofactor. Requires Fe cation as cofactor.

It catalyses the reaction gibberellin A20 + 2-oxoglutarate + O2 = gibberellin A1 + succinate + CO2. Its function is as follows. Converts the inactive gibberellin precursors GA9 and GA20 in the bioactives gibberellins GA4 and GA1. This is Gibberellin 3-beta-dioxygenase 2-2 (GA3ox2-2) from Triticum aestivum (Wheat).